Consider the following 238-residue polypeptide: Ribonuclease PH (238 aa).

Phosphate is bound by residues Arg86 and 124 to 126 (GTR).

It belongs to the RNase PH family. In terms of assembly, homohexameric ring arranged as a trimer of dimers.

The enzyme catalyses tRNA(n+1) + phosphate = tRNA(n) + a ribonucleoside 5'-diphosphate. In terms of biological role, phosphorolytic 3'-5' exoribonuclease that plays an important role in tRNA 3'-end maturation. Removes nucleotide residues following the 3'-CCA terminus of tRNAs; can also add nucleotides to the ends of RNA molecules by using nucleoside diphosphates as substrates, but this may not be physiologically important. Probably plays a role in initiation of 16S rRNA degradation (leading to ribosome degradation) during starvation. The chain is Ribonuclease PH from Psychrobacter cryohalolentis (strain ATCC BAA-1226 / DSM 17306 / VKM B-2378 / K5).